We begin with the raw amino-acid sequence, 35 residues long: uncharacterized protein (35 aa).

The first 18 residues, 1 to 18 (MRSLVFVQLSLLSWEIFC), serve as a signal peptide directing secretion.

This is an uncharacterized protein from Saccharomyces cerevisiae (strain ATCC 204508 / S288c) (Baker's yeast).